Consider the following 20-residue polypeptide: FLAKKVGKQLASHLAKKQLE.

E20 is modified (glutamic acid 1-amide).

In terms of tissue distribution, expressed by the venom gland.

It is found in the secreted. The sequence is that of Short cationic peptide-4a from Cupiennius salei (American wandering spider).